The following is a 506-amino-acid chain: Maturase K (506 aa).

Belongs to the intron maturase 2 family. MatK subfamily.

The protein resides in the plastid. The protein localises to the chloroplast. Its function is as follows. Usually encoded in the trnK tRNA gene intron. Probably assists in splicing its own and other chloroplast group II introns. This is Maturase K from Melilotus albus (White sweet clover).